We begin with the raw amino-acid sequence, 224 residues long: Glycerol-3-phosphate acyltransferase (224 aa).

6 consecutive transmembrane segments (helical) span residues 14 to 34 (INMIFYIVAFLFGGIPFGWLL), 70 to 90 (YLSILTIILDATKGLIVVLGA), 99 to 119 (TQWSIALLAILGHCYSPYLGF), 129 to 149 (IGSVLLLIPVEGICGLIIWGI), 162 to 182 (LIGVLGTIGLTFVLPYILPLP), and 185 to 205 (ISIIKQINTHTPLVLIGLFIF).

The protein belongs to the PlsY family. As to quaternary structure, probably interacts with PlsX.

The protein localises to the cell inner membrane. The enzyme catalyses an acyl phosphate + sn-glycerol 3-phosphate = a 1-acyl-sn-glycero-3-phosphate + phosphate. It functions in the pathway lipid metabolism; phospholipid metabolism. Catalyzes the transfer of an acyl group from acyl-phosphate (acyl-PO(4)) to glycerol-3-phosphate (G3P) to form lysophosphatidic acid (LPA). This enzyme utilizes acyl-phosphate as fatty acyl donor, but not acyl-CoA or acyl-ACP. The protein is Glycerol-3-phosphate acyltransferase of Helicobacter hepaticus (strain ATCC 51449 / 3B1).